Reading from the N-terminus, the 88-residue chain is HssA/B-like protein 19 (88 aa).

The protein belongs to the hssA/B family.

This chain is HssA/B-like protein 19 (hssl19), found in Dictyostelium discoideum (Social amoeba).